The chain runs to 268 residues: MTLLNVSDLSHHYAHGGFSGKHQHQAVLNNVSLALKSGETVALLGRSGCGKSTLARLLVGLESPSQGNISWRGEPLAKLNRAQRKAFRRDIQMVFQDSISAVNPRKTVREILREPMRHLLSLKKAEQLARASEMLKAVDLDDSVLDKRPPQLSGGQLQRVCLARALAVEPKLLILDEAVSNLDLVLQAGVIRLLKKLQQQFGTACLFITHDLRLVERFCQRVMVMDNGQIVETQVVGDKLTFSSDAGRVLQNAVLPAFPVRRRTTEKV.

The ABC transporter domain maps to 4 to 252 (LNVSDLSHHY…SSDAGRVLQN (249 aa)). 45–52 (GRSGCGKS) is an ATP binding site.

This sequence belongs to the ABC transporter superfamily. Nickel importer (TC 3.A.1.5.3) family. As to quaternary structure, the complex is composed of two ATP-binding proteins (NikD and NikE), two transmembrane proteins (NikB and NikC) and a solute-binding protein (NikA).

The protein resides in the cell inner membrane. The enzyme catalyses Ni(2+)(out) + ATP + H2O = Ni(2+)(in) + ADP + phosphate + H(+). Its function is as follows. Part of the ABC transporter complex NikABCDE involved in nickel import. Responsible for energy coupling to the transport system. The chain is Nickel import ATP-binding protein NikE from Escherichia coli O6:K15:H31 (strain 536 / UPEC).